A 341-amino-acid polypeptide reads, in one-letter code: Probable membrane-associated kinase regulator 1 (341 aa).

5 disordered regions span residues 1 to 29 (MRRQ…FEFN), 67 to 122 (TLGS…SSRP), 158 to 185 (PKTN…KRMS), 206 to 230 (LSPK…NNIR), and 288 to 310 (RGGF…SVSS). Composition is skewed to low complexity over residues 12–29 (PPQS…FEFN), 67–108 (TLGS…SFPL), and 167–180 (SSSS…APSS). Polar residues predominate over residues 208-230 (PKQSSNIKTESSSSLKDSGNNIR). The segment covering 297 to 310 (SCSSSSSNNNSVSS) has biased composition (low complexity).

As to quaternary structure, a C-terminus-derived peptide binds BRI1 in vitro.

It localises to the cell membrane. May negatively regulate brassinosteroid signaling. The chain is Probable membrane-associated kinase regulator 1 (MAKR1) from Arabidopsis thaliana (Mouse-ear cress).